We begin with the raw amino-acid sequence, 522 residues long: Protein nucleotidyltransferase YdiU (522 aa).

Residues Gly109, Gly111, Arg112, Lys132, Asp144, Gly145, Arg195, and Arg202 each contribute to the ATP site. The active-site Proton acceptor is Asp271. The Mg(2+) site is built by Asn272 and Asp281. Asp281 lines the ATP pocket.

It belongs to the SELO family. The cofactor is Mg(2+). It depends on Mn(2+) as a cofactor.

The catalysed reaction is L-seryl-[protein] + ATP = 3-O-(5'-adenylyl)-L-seryl-[protein] + diphosphate. It carries out the reaction L-threonyl-[protein] + ATP = 3-O-(5'-adenylyl)-L-threonyl-[protein] + diphosphate. It catalyses the reaction L-tyrosyl-[protein] + ATP = O-(5'-adenylyl)-L-tyrosyl-[protein] + diphosphate. The enzyme catalyses L-histidyl-[protein] + UTP = N(tele)-(5'-uridylyl)-L-histidyl-[protein] + diphosphate. The catalysed reaction is L-seryl-[protein] + UTP = O-(5'-uridylyl)-L-seryl-[protein] + diphosphate. It carries out the reaction L-tyrosyl-[protein] + UTP = O-(5'-uridylyl)-L-tyrosyl-[protein] + diphosphate. Its function is as follows. Nucleotidyltransferase involved in the post-translational modification of proteins. It can catalyze the addition of adenosine monophosphate (AMP) or uridine monophosphate (UMP) to a protein, resulting in modifications known as AMPylation and UMPylation. The protein is Protein nucleotidyltransferase YdiU of Burkholderia cenocepacia (strain HI2424).